A 599-amino-acid polypeptide reads, in one-letter code: Chaperone protein DnaK (599 aa).

Thr187 carries the post-translational modification Phosphothreonine; by autocatalysis. Residues 575 to 599 (AQQAATENSKDSDTVEAEIVDDKAN) are disordered.

Belongs to the heat shock protein 70 family.

In terms of biological role, acts as a chaperone. The protein is Chaperone protein DnaK of Mycoplasmopsis pulmonis (strain UAB CTIP) (Mycoplasma pulmonis).